Consider the following 315-residue polypeptide: GTP cyclohydrolase MptA 1 (315 aa).

Belongs to the GTP cyclohydrolase IV family. Homodimer. Fe(2+) serves as cofactor.

The catalysed reaction is GTP + H2O = 7,8-dihydroneopterin 2',3'-cyclic phosphate + formate + diphosphate + H(+). The protein operates within cofactor biosynthesis; 5,6,7,8-tetrahydromethanopterin biosynthesis. Its function is as follows. Converts GTP to 7,8-dihydro-D-neopterin 2',3'-cyclic phosphate, the first intermediate in the biosynthesis of coenzyme methanopterin. The chain is GTP cyclohydrolase MptA 1 from Methanocella arvoryzae (strain DSM 22066 / NBRC 105507 / MRE50).